A 698-amino-acid polypeptide reads, in one-letter code: tRNA (guanine(37)-N(1))-methyltransferase (698 aa).

Positions 233 to 254 are disordered; that stretch reads DSTAHDSVQRNEGKTPKGPLDG. The span at 234 to 247 shows a compositional bias: basic and acidic residues; sequence STAHDSVQRNEGKT. S-adenosyl-L-methionine is bound by residues arginine 394, 432-433, and 459-460; these read DI and DA. Disordered stretches follow at residues 500-522 and 534-582; these read PDQN…GHVD and KKKL…DAPR. Composition is skewed to basic and acidic residues over residues 513 to 522, 539 to 550, and 569 to 582; these read RESDRVGHVD, HADTNDPLEERP, and TNND…DAPR. Asparagine 603 contacts S-adenosyl-L-methionine.

This sequence belongs to the class I-like SAM-binding methyltransferase superfamily. TRM5/TYW2 family. As to quaternary structure, monomer.

It localises to the mitochondrion matrix. The protein resides in the nucleus. Its subcellular location is the cytoplasm. It catalyses the reaction guanosine(37) in tRNA + S-adenosyl-L-methionine = N(1)-methylguanosine(37) in tRNA + S-adenosyl-L-homocysteine + H(+). In terms of biological role, specifically methylates the N1 position of guanosine-37 in various cytoplasmic and mitochondrial tRNAs. Methylation is not dependent on the nature of the nucleoside 5' of the target nucleoside. This is the first step in the biosynthesis of wybutosine (yW), a modified base adjacent to the anticodon of tRNAs and required for accurate decoding. This is tRNA (guanine(37)-N(1))-methyltransferase from Plasmodium knowlesi (strain H).